Here is a 378-residue protein sequence, read N- to C-terminus: TelA-like protein SAS1347 (378 aa).

Belongs to the TelA family.

The chain is TelA-like protein SAS1347 from Staphylococcus aureus (strain MSSA476).